The chain runs to 291 residues: Protease HtpX homolog (291 aa).

The next 2 membrane-spanning stretches (helical) occupy residues 4 to 24 and 38 to 58; these read VILF…TARI and MGML…ISLL. His144 is a binding site for Zn(2+). Glu145 is an active-site residue. His148 serves as a coordination point for Zn(2+). Helical transmembrane passes span 159–179 and 199–219; these read LIQG…AYAV and ISSI…VMFF. Glu224 is a binding site for Zn(2+).

This sequence belongs to the peptidase M48B family. Zn(2+) is required as a cofactor.

It is found in the cell inner membrane. This Pelodictyon phaeoclathratiforme (strain DSM 5477 / BU-1) protein is Protease HtpX homolog.